We begin with the raw amino-acid sequence, 331 residues long: Lactamase-like protein nscB (331 aa).

Zn(2+)-binding residues include histidine 106, histidine 108, aspartate 110, and histidine 111. Catalysis depends on aspartate 110, which acts as the Proton donor/acceptor.

Belongs to the metallo-beta-lactamase superfamily. Zn(2+) is required as a cofactor.

It participates in secondary metabolite biosynthesis. Its function is as follows. Lactamase-like protein; part of the gene cluster that mediates the biosynthesis of neosartoricin B, a prenylated anthracenone that probably exhibits T-cell antiproliferative activity, suggestive of a physiological role as an immunosuppressive agent. The non-reducing polyketide synthase nscA probably synthesizes and cyclizes the decaketide backbone. The hydrolase nscB then mediates the product release through hydrolysis followed by spontaneous decarboxylation. The prenyltransferase nscD catalyzes the addition of the dimethylallyl group to the aromatic C5. The FAD-dependent monooxygenase nscC is then responsible for the stereospecific hydroxylation at C2. Neosartoricin B can be converted into two additional compounds neosartoricins C and D. Neosartoricin C is a spirocyclic compound that is cyclized through the attack of C3 hydroxyl on C14, followed by dehydration. On the other hand, neosartoricin D is a further cyclized compound in which attack of C2 on C14 in neosartoricin C results in the formation of the acetal-containing dioxabicyclo-octanone ring. Both of these compounds are novel and possibly represent related metabolites of the gene cluster. The protein is Lactamase-like protein nscB of Trichophyton equinum (strain ATCC MYA-4606 / CBS 127.97) (Horse ringworm fungus).